Here is a 157-residue protein sequence, read N- to C-terminus: Putative low molecular weight protein-tyrosine-phosphatase slr0328 (157 aa).

C7 acts as the Nucleophile in catalysis. The active site involves R13. D124 serves as the catalytic Proton donor.

The protein belongs to the low molecular weight phosphotyrosine protein phosphatase family.

It carries out the reaction O-phospho-L-tyrosyl-[protein] + H2O = L-tyrosyl-[protein] + phosphate. The sequence is that of Putative low molecular weight protein-tyrosine-phosphatase slr0328 from Synechocystis sp. (strain ATCC 27184 / PCC 6803 / Kazusa).